We begin with the raw amino-acid sequence, 534 residues long: Solute carrier family 22 member 15 (534 aa).

The helical transmembrane segment at 22–42 (FLLAVLLQLYSATEAIIITIL) threads the bilayer. Residues asparagine 52, asparagine 58, and asparagine 83 are each glycosylated (N-linked (GlcNAc...) asparagine). A run of 11 helical transmembrane segments spans residues 97–117 (AAYEVSVSSSVYFGGVLIGVI), 136–156 (LALEVVFAVMNALTPIFPLFL), 161–181 (LVGVMNGGMSLVAFVLLNECI), 191–211 (SLGSLCFAVGIAQFALIGYFI), 216–236 (LLALLVNVQGAAVLALSLCIP), 297–317 (TLIMMWVWFVCSLVYYGLTLS), 327–347 (LNLALSGLAELPAYPLCMYLI), 356–376 (GSLAGFLCVGGGACLLIMLVP), 391–411 (TLSLLGKLNISAAFNIVYIYS), 424–444 (MGVCSMFSRIGGIIAPFIPAL), and 450–470 (ALPFIVFGAAGVSAGLLSLLL). Asparagine 513 carries an N-linked (GlcNAc...) asparagine glycan.

Belongs to the major facilitator (TC 2.A.1) superfamily. Organic cation transporter (TC 2.A.1.19) family.

Its subcellular location is the membrane. In terms of biological role, probably transports organic cations. The protein is Solute carrier family 22 member 15 (slc22a15) of Xenopus tropicalis (Western clawed frog).